Here is an 858-residue protein sequence, read N- to C-terminus: Protein lines (858 aa).

The tract at residues 1–102 (MDTSSAAGSG…NSPTTTPCSS (102 aa)) is disordered. Composition is skewed to low complexity over residues 20-30 (STVATSTTSAS) and 65-102 (LDAN…PCSS).

The protein belongs to the protein lines family. As to quaternary structure, interacts with drm. Expressed throughout the embryo, including the hindgut, posterior midgut and embryonic epidermis.

It is found in the cytoplasm. The protein resides in the nucleus. Its function is as follows. Has a dual role as a segment polarity protein and as a modulator of the Abd-B protein. Required for Abd-B to activate the transcription of genes (including ems, cut and sal) that are involved in posterior spiracle morphogenesis. Also required for Abd-B to form an eighth abdominal denticle belt. Acts in a hierarchy downstream of drm and upstream of bowl during foregut and hindgut patterning and morphogenesis. Involved in cell rearrangement during elongation of the embryonic hindgut. Required to regulate expression of embryonic hindgut patterning genes in order to establish the large intestine and at least some rectum, and to repress small intestine fate. Required for late wingless (wg)-dependent cell fate specification in the dorsal embryonic epidermis. Acts in concert with wg to regulate expression of wg itself and also to regulate wg-target genes. May have a role in ventral epidermal patterning, independent of wg signaling. This Drosophila melanogaster (Fruit fly) protein is Protein lines.